The primary structure comprises 1365 residues: DNA-directed RNA polymerase subunit beta'' (1365 aa).

Zn(2+) is bound by residues Cys224, Cys295, Cys302, and Cys305.

It belongs to the RNA polymerase beta' chain family. RpoC2 subfamily. In plastids the minimal PEP RNA polymerase catalytic core is composed of four subunits: alpha, beta, beta', and beta''. When a (nuclear-encoded) sigma factor is associated with the core the holoenzyme is formed, which can initiate transcription. The cofactor is Zn(2+).

The protein localises to the plastid. It is found in the chloroplast. It catalyses the reaction RNA(n) + a ribonucleoside 5'-triphosphate = RNA(n+1) + diphosphate. In terms of biological role, DNA-dependent RNA polymerase catalyzes the transcription of DNA into RNA using the four ribonucleoside triphosphates as substrates. This is DNA-directed RNA polymerase subunit beta'' from Fagopyrum esculentum subsp. ancestrale (Wild buckwheat).